A 359-amino-acid chain; its full sequence is 4-galactosyl-N-acetylglucosaminide 3-alpha-L-fucosyltransferase 9 (359 aa).

Residues 1–11 are Cytoplasmic-facing; it reads MTSTSKGILRP. A helical; Signal-anchor for type II membrane protein membrane pass occupies residues 12–32; the sequence is FLIVCIILGCFMACLLIYIKP. Residues 33–359 lie on the Lumenal side of the membrane; sequence TNSWVFSPME…VGNLEKWFWN (327 aa). The N-linked (GlcNAc...) asparagine glycan is linked to Asn62. The interval 63 to 168 is acceptor-binding; it reads ETTILVWVWP…RRDSDIQVPY (106 aa). Gln75 provides a ligand contact to a beta-D-galactosyl-(1-&gt;4)-N-acetyl-beta-D-glucosaminyl derivative. Intrachain disulfides connect Cys82-Cys335, Cys91-Cys338, and Cys190-Cys238. A glycan (N-linked (GlcNAc...) asparagine) is linked at Asn101. Glu137 is a binding site for a beta-D-galactosyl-(1-&gt;4)-N-acetyl-beta-D-glucosaminyl derivative. The Nucleophile role is filled by Glu137. Glu137 contributes to the GDP-beta-L-fucose binding site. Asn153 is a glycosylation site (N-linked (GlcNAc...) asparagine). GDP-beta-L-fucose contacts are provided by Tyr168, Val192, Ser194, Asn195, Arg202, Val226, Tyr241, Asn246, Tyr252, Glu255, and Lys256. The tract at residues 169 to 326 is donor-binding; sequence GFLTVSTNPF…NWRKDFTVNL (158 aa). The segment at 327 to 359 is acceptor-binding; it reads PRFWESHACLACDHVKRHQEYKSVGNLEKWFWN.

It belongs to the glycosyltransferase 10 family. In terms of assembly, homodimer. In terms of processing, N-glycosylated with complex-type N-glycans. In terms of tissue distribution, mainly detected in brain and kidney.

It localises to the golgi apparatus. Its subcellular location is the trans-Golgi network membrane. The protein resides in the golgi apparatus membrane. It catalyses the reaction a beta-D-galactosyl-(1-&gt;4)-N-acetyl-beta-D-glucosaminyl derivative + GDP-beta-L-fucose = a beta-D-galactosyl-(1-&gt;4)-[alpha-L-fucosyl-(1-&gt;3)]-N-acetyl-beta-D-glucosaminyl derivative + GDP + H(+). It carries out the reaction an alpha-Neu5Ac-(2-&gt;3)-beta-D-Gal-(1-&gt;4)-beta-D-GlcNAc-(1-&gt;3)-beta-D-Gal-(1-&gt;4)-beta-D-GlcNAc derivative + GDP-beta-L-fucose = an alpha-Neu5Ac-(2-&gt;3)-beta-D-Gal-(1-&gt;4)-beta-D-GlcNAc-(1-&gt;3)-beta-D-Gal-(1-&gt;4)-[alpha-L-Fuc-(1-&gt;3)]-beta-D-GlcNAc derivative + GDP + H(+). The catalysed reaction is alpha-N-glycoloylneuraminosyl-(2-&gt;3)-beta-D-galactosyl-(1-&gt;4)-N-acetyl-beta-D-glucosaminyl-(1-&gt;3)-beta-D-galactosyl-(1-&gt;4)-N-acetyl-beta-D-glucosaminyl-(1-&gt;3)-beta-D-galactosyl-(1-&gt;4)-beta-D-glucosyl-(1&lt;-&gt;1')-ceramide + GDP-beta-L-fucose = alpha-N-glycoloylneuraminosyl-(2-&gt;3)-beta-D-galactosyl-(1-&gt;4)-N-acetyl-beta-D-glucosaminyl-(1-&gt;3)-beta-D-galactosyl-(1-&gt;4)-[alpha-L-fucosyl-(1-&gt;3)]-N-acetyl-beta-D-glucosaminyl-(1-&gt;3)-beta-D-galactosyl-(1-&gt;4)-beta-D-glucosyl-(1&lt;-&gt;1')-ceramide + GDP + H(+). The enzyme catalyses alpha-D-galactosyl-(1-&gt;3)-beta-D-galactosyl-(1-&gt;4)-N-acetyl-beta-D-glucosaminyl-(1-&gt;3)-beta-D-galactosyl-(1-&gt;4)-beta-D-glucosyl-(1&lt;-&gt;1')-ceramide + GDP-beta-L-fucose = a neolactoside IV(3)-alpha-Gal,III(3)-alpha-Fuc-nLc4Cer + GDP + H(+). It catalyses the reaction a neolactoside nLc4Cer + GDP-beta-L-fucose = a neolactoside III(3)-alpha-Fuc-nLc4Cer + GDP + H(+). It carries out the reaction an N-acetyl-alpha-neuraminyl-(2-&gt;3)-beta-D-galactosyl-(1-&gt;4)-N-acetyl-beta-D-glucosaminyl derivative + GDP-beta-L-fucose = an alpha-Neu5Ac-(2-&gt;3)-beta-D-Gal-(1-&gt;4)-[alpha-L-Fuc-(1-&gt;3)]-beta-D-GlcNAc derivative + GDP + H(+). The catalysed reaction is beta-D-Gal-(1-&gt;4)-beta-D-GlcNAc-(1-&gt;3)-beta-D-Gal-(1-&gt;4)-D-Glc + GDP-beta-L-fucose = beta-D-Gal-(1-&gt;4)-[alpha-L-Fuc-(1-&gt;3)]-beta-D-GlcNAc-(1-&gt;3)-beta-D-Gal-(1-&gt;4)-D-Glc + GDP + H(+). The enzyme catalyses an alpha-L-Fuc-(1-&gt;2)-beta-D-Gal-(1-&gt;4)-beta-D-GlcNAc derivative + GDP-beta-L-fucose = an alpha-L-Fuc-(1-&gt;2)-beta-D-Gal-(1-&gt;4)-[alpha-L-Fuc-(1-&gt;3)]-beta-D-GlcNAc derivative + GDP + H(+). It participates in protein modification; protein glycosylation. Its pathway is glycolipid biosynthesis. With respect to regulation, activated by Mn2+. Catalyzes alpha(1-&gt;3) linkage of fucosyl moiety transferred from GDP-beta-L-fucose to N-acetyl glucosamine (GlcNAc) within type 2 lactosamine (LacNAc, beta-D-Gal-(1-&gt;4)-beta-D-GlcNAc-) glycan attached to glycolipids and N- or O-linked glycoproteins. Fucosylates distal type 2 LacNAc and its fucosylated (H-type 2 LacNAc) and sialylated (sialyl-type 2 LacNAc) derivatives to form Lewis x (Lex) (CD15) and Lewis y (Ley) antigenic epitopes involved in cell adhesion and differentiation. Generates Lex epitopes in the brain, presumably playing a role in the maintenance of neuronal stemness and neurite outgrowth in progenitor neural cells. Fucosylates the internal type 2 LacNAc unit of the polylactosamine chain to form VIM-2 antigen that serves as recognition epitope for SELE. Can also modify milk oligosaccharides in particular type 2 tetrasaccharide LNnT. The sequence is that of 4-galactosyl-N-acetylglucosaminide 3-alpha-L-fucosyltransferase 9 from Mus musculus (Mouse).